A 198-amino-acid polypeptide reads, in one-letter code: Transmembrane gamma-carboxyglutamic acid protein 2 (198 aa).

The first 17 residues, 1 to 17 (MRGRPSLLLVYMGLATC), serve as a signal peptide directing secretion. The propeptide occupies 18-51 (LDTSPHREQNQVLDIFLDAPEAQSFLVGRRRFPR). The Gla domain maps to 52-98 (ANHWDLELLTPGNLERECLEERCSWEEAREYFEDNTLTERFWESYTY). The Extracellular portion of the chain corresponds to 52–111 (ANHWDLELLTPGNLERECLEERCSWEEAREYFEDNTLTERFWESYTYNGKGGRGRVDVAG). Cys-69 and Cys-74 are disulfide-bonded. The residue at position 72 (Glu-72) is a 4-carboxyglutamate. A helical transmembrane segment spans residues 112–132 (LAVGLTSGILLIVLAGLGAFW). Residues 133 to 198 (YLHYRRRRLR…PPYSSLRRPH (66 aa)) lie on the Cytoplasmic side of the membrane. The segment at 156-198 (PLSPQTPQSPPLPPGLPTYEQALAASGVHDAPPPPYSSLRRPH) is disordered. Residues 162-171 (PQSPPLPPGL) are compositionally biased toward pro residues. The LPXY motif; mediates binding to WW domain-containing proteins signature appears at 171–174 (LPTY). The PPXY motif; mediates binding to WW domain-containing proteins signature appears at 188-191 (PPPY).

In terms of assembly, interacts with NEDD4. Interacts with transcriptional coactivator YAP1. In terms of processing, gamma-carboxyglutamate residues are formed by vitamin K dependent carboxylation. These residues are essential for the binding of calcium.

It is found in the cell membrane. In Mus musculus (Mouse), this protein is Transmembrane gamma-carboxyglutamic acid protein 2 (Prrg2).